Reading from the N-terminus, the 277-residue chain is Cell death abnormality protein 2 (277 aa).

Positions 14–112 constitute an SH2 domain; that stretch reads FYFPGMSRED…EASLLSAYKK (99 aa). One can recognise an SH3 1 domain in the interval 113-173; it reads PIIEVVVGTF…PANYVQVQSG (61 aa). Residues 179-217 form a disordered region; it reads RISKGTSQSSIGSSGNGAERFSSTSTSSENAEAHPTLPT. Residues 182–206 are compositionally biased toward low complexity; that stretch reads KGTSQSSIGSSGNGAERFSSTSTSS. An SH3 2 domain is found at 214 to 275; that stretch reads TLPTTAKVTF…PFTYIRFNTA (62 aa).

The protein belongs to the CRK family. In terms of assembly, interacts with ced-5 (via C-terminus which contains a candidate SH3-binding, proline-rich region). Forms a ternary complex with ced-5 and ced-12. Interacts (via SH-2 domain) with src-1 (when activated and phosphorylated at 'Tyr-416').

Required for cell migration and engulfment of cell corpses but not for programmed cell death/apoptosis. Also has a role in the migration of the 2 gonadal distal tip cells (DTCs). The polypeptide is Cell death abnormality protein 2 (Caenorhabditis briggsae).